A 163-amino-acid chain; its full sequence is MTTPIIDLQIAAENSENLPSLAQFTQWVQRALAHEAQTEDFPETEITIRIVDEAESYELNLTYRGKDKPTNVLSFPFEVPEGIELPLLGDLIICRQVVEKEAQEQQISLESHWAHLAIHGTLHLLGYDHIEDAEAEEMEGLETEIMQSLGFEDPYISEKVIEE.

3 residues coordinate Zn(2+): histidine 119, histidine 123, and histidine 129.

Belongs to the endoribonuclease YbeY family. Zn(2+) serves as cofactor.

It localises to the cytoplasm. Functionally, single strand-specific metallo-endoribonuclease involved in late-stage 70S ribosome quality control and in maturation of the 3' terminus of the 16S rRNA. The protein is Endoribonuclease YbeY of Actinobacillus pleuropneumoniae serotype 5b (strain L20).